Reading from the N-terminus, the 267-residue chain is MLPFVLVLLVATSALAAPSVVISQDNINNIAPRVGNGRPISSALIDRAFEIVDGGDTNIYILTIQQILNDLADQPDGLSQSLAVTQAVAALGELATGVPGNSCEAAAVIDAYANSVRTGDNSALSIAVANYINRLSSNIGLISQLASNPDSLRYSSGPAGNCAGGGRSYQFEAAWDAVLNNANPYQIGLINEEYCAARRLYNAFNSRSNNVGAAITAGAVVAQTQAAQIILPSLVNVLSAVAAGGNVAGAAAQAGQALANAAANVQL.

The first 16 residues, M1 to A16, serve as a signal peptide directing secretion. Position 19 is an N-acetylserine; in short form (S19). C103 and C162 form a disulfide bridge.

In terms of assembly, silk fibroin elementary unit consists in a disulfide-linked heavy and light chain and a p25 glycoprotein in molar ratios of 6:6:1. This results in a complex of approximately 2.3 MDa. In terms of processing, partially N-terminally processed to yield a short form which lacks the first two residues of the long form. The interchain disulfide bridge is essential for the intracellular transport and secretion of fibroin. In terms of tissue distribution, produced exclusively in the posterior (PSG) section of silk glands, which are essentially modified salivary glands.

The protein localises to the secreted. In terms of biological role, it is likely that the major role of L-chain is to prevent the retention of H-chain in ER by forming the disulfide linkage. The chain is Fibroin light chain (FIBL) from Galleria mellonella (Greater wax moth).